A 184-amino-acid chain; its full sequence is Protein C8 (184 aa).

Residues 1–21 (MSSIRFIACLYLISIFGNCHE) form the signal peptide.

It belongs to the poxviridae C8 protein family.

This Vaccinia virus (strain Copenhagen) (VACV) protein is Protein C8.